An 88-amino-acid chain; its full sequence is Alpha-latrotoxin-associated low molecular weight protein-2 (88 aa).

An N-terminal signal peptide occupies residues 1-19 (MLKLICIAFLVTVLTLVAG). Position 20 is a pyrrolidone carboxylic acid (glutamine 20). 3 disulfide bridges follow: cysteine 30/cysteine 66, cysteine 46/cysteine 62, and cysteine 49/cysteine 75.

It belongs to the arthropod CHH/MIH/GIH/VIH hormone family. Post-translationally, the N-terminus is blocked. In terms of tissue distribution, expressed by the venom gland.

The protein localises to the secreted. Functionally, may increase the toxicity of alpha-latrotoxin and/or other venom components. Is non-toxic to mice and to the cockroach Periplaneta americana. This is Alpha-latrotoxin-associated low molecular weight protein-2 from Latrodectus tredecimguttatus (Mediterranean black widow spider).